The sequence spans 157 residues: NAD(P)H-quinone oxidoreductase subunit N (157 aa).

Belongs to the complex I NdhN subunit family. As to quaternary structure, NDH-1 can be composed of about 15 different subunits; different subcomplexes with different compositions have been identified which probably have different functions.

It is found in the cellular thylakoid membrane. It catalyses the reaction a plastoquinone + NADH + (n+1) H(+)(in) = a plastoquinol + NAD(+) + n H(+)(out). It carries out the reaction a plastoquinone + NADPH + (n+1) H(+)(in) = a plastoquinol + NADP(+) + n H(+)(out). NDH-1 shuttles electrons from an unknown electron donor, via FMN and iron-sulfur (Fe-S) centers, to quinones in the respiratory and/or the photosynthetic chain. The immediate electron acceptor for the enzyme in this species is believed to be plastoquinone. Couples the redox reaction to proton translocation, and thus conserves the redox energy in a proton gradient. Cyanobacterial NDH-1 also plays a role in inorganic carbon-concentration. This is NAD(P)H-quinone oxidoreductase subunit N from Synechococcus sp. (strain CC9902).